The following is a 338-amino-acid chain: Anthranilate phosphoribosyltransferase (338 aa).

Residues glycine 81, 84-85 (GD), threonine 89, 91-94 (NIST), 109-117 (KHGNRALSS), and alanine 121 contribute to the 5-phospho-alpha-D-ribose 1-diphosphate site. Position 81 (glycine 81) interacts with anthranilate. Position 93 (serine 93) interacts with Mg(2+). Position 112 (asparagine 112) interacts with anthranilate. Arginine 167 contributes to the anthranilate binding site. Positions 225 and 226 each coordinate Mg(2+).

It belongs to the anthranilate phosphoribosyltransferase family. As to quaternary structure, homodimer. Mg(2+) is required as a cofactor.

It carries out the reaction N-(5-phospho-beta-D-ribosyl)anthranilate + diphosphate = 5-phospho-alpha-D-ribose 1-diphosphate + anthranilate. The protein operates within amino-acid biosynthesis; L-tryptophan biosynthesis; L-tryptophan from chorismate: step 2/5. Functionally, catalyzes the transfer of the phosphoribosyl group of 5-phosphorylribose-1-pyrophosphate (PRPP) to anthranilate to yield N-(5'-phosphoribosyl)-anthranilate (PRA). The polypeptide is Anthranilate phosphoribosyltransferase (Rhizobium johnstonii (strain DSM 114642 / LMG 32736 / 3841) (Rhizobium leguminosarum bv. viciae)).